We begin with the raw amino-acid sequence, 324 residues long: Sex-lethal homolog (324 aa).

2 consecutive RRM domains span residues 102-180 and 188-268; these read TNLI…YARP and TNLY…LAEE.

As to expression, expressed in somatic cells of both sexes throughout development, but not in the pole cells which are the progenitors of the germline.

Its subcellular location is the nucleus. In terms of biological role, unknown; apparently not involved in somatic sex determination. The protein is Sex-lethal homolog (SXL) of Musca domestica (House fly).